The following is a 416-amino-acid chain: NADH-quinone oxidoreductase subunit D (416 aa).

It belongs to the complex I 49 kDa subunit family. In terms of assembly, NDH-1 is composed of 14 different subunits. Subunits NuoB, C, D, E, F, and G constitute the peripheral sector of the complex.

Its subcellular location is the cell inner membrane. The catalysed reaction is a quinone + NADH + 5 H(+)(in) = a quinol + NAD(+) + 4 H(+)(out). In terms of biological role, NDH-1 shuttles electrons from NADH, via FMN and iron-sulfur (Fe-S) centers, to quinones in the respiratory chain. The immediate electron acceptor for the enzyme in this species is believed to be ubiquinone. Couples the redox reaction to proton translocation (for every two electrons transferred, four hydrogen ions are translocated across the cytoplasmic membrane), and thus conserves the redox energy in a proton gradient. The protein is NADH-quinone oxidoreductase subunit D of Rhodopseudomonas palustris (strain BisB5).